The sequence spans 1609 residues: Probable cation-transporting ATPase I (1609 aa).

Transmembrane regions (helical) follow at residues glycine 30 to valine 50, leucine 176 to valine 196, isoleucine 238 to leucine 258, leucine 357 to isoleucine 377, valine 641 to glycine 661, tryptophan 673 to serine 693, isoleucine 778 to valine 798, leucine 921 to valine 941, threonine 969 to leucine 989, and alanine 997 to alanine 1017. The active-site 4-aspartylphosphate intermediate is aspartate 1053. Residues aspartate 1335 and aspartate 1339 each coordinate Mg(2+). Helical transmembrane passes span isoleucine 1396–alanine 1416 and leucine 1426–glutamine 1446. Residues tyrosine 1447–proline 1476 are disordered. Residues glutamate 1449–aspartate 1462 show a composition bias toward acidic residues. A run of 2 helical transmembrane segments spans residues valine 1542–isoleucine 1562 and proline 1573–alanine 1593.

The protein belongs to the cation transport ATPase (P-type) (TC 3.A.3) family.

The protein localises to the cell membrane. The catalysed reaction is ATP + H2O = ADP + phosphate + H(+). The protein is Probable cation-transporting ATPase I (ctpI) of Mycobacterium leprae (strain TN).